We begin with the raw amino-acid sequence, 250 residues long: Flavin-dependent thymidylate synthase (250 aa).

The ThyX domain maps to 7–233 (LRVQLIAKTE…PQVFSDFEIT (227 aa)). Residues Ser-71, 95–97 (RHR), and Gln-103 contribute to the FAD site. DUMP contacts are provided by residues 92-95 (ELIR), 103-107 (QLSQR), and Arg-172. Residues 95 to 105 (RHRHFSYSQLS) carry the ThyX motif motif. Residues 188–190 (NYR) and His-194 each bind FAD. DUMP is bound at residue Arg-199. Residue Arg-199 is the Involved in ionization of N3 of dUMP, leading to its activation of the active site.

The protein belongs to the thymidylate synthase ThyX family. Homotetramer. FAD is required as a cofactor.

It carries out the reaction dUMP + (6R)-5,10-methylene-5,6,7,8-tetrahydrofolate + NADPH + H(+) = dTMP + (6S)-5,6,7,8-tetrahydrofolate + NADP(+). It functions in the pathway pyrimidine metabolism; dTTP biosynthesis. Catalyzes the reductive methylation of 2'-deoxyuridine-5'-monophosphate (dUMP) to 2'-deoxythymidine-5'-monophosphate (dTMP) while utilizing 5,10-methylenetetrahydrofolate (mTHF) as the methyl donor, and NADPH and FADH(2) as the reductant. In Mycolicibacterium gilvum (strain PYR-GCK) (Mycobacterium gilvum (strain PYR-GCK)), this protein is Flavin-dependent thymidylate synthase.